The chain runs to 493 residues: Aspartyl/glutamyl-tRNA(Asn/Gln) amidotransferase subunit B (493 aa).

It belongs to the GatB/GatE family. GatB subfamily. In terms of assembly, heterotrimer of A, B and C subunits.

It carries out the reaction L-glutamyl-tRNA(Gln) + L-glutamine + ATP + H2O = L-glutaminyl-tRNA(Gln) + L-glutamate + ADP + phosphate + H(+). It catalyses the reaction L-aspartyl-tRNA(Asn) + L-glutamine + ATP + H2O = L-asparaginyl-tRNA(Asn) + L-glutamate + ADP + phosphate + 2 H(+). Functionally, allows the formation of correctly charged Asn-tRNA(Asn) or Gln-tRNA(Gln) through the transamidation of misacylated Asp-tRNA(Asn) or Glu-tRNA(Gln) in organisms which lack either or both of asparaginyl-tRNA or glutaminyl-tRNA synthetases. The reaction takes place in the presence of glutamine and ATP through an activated phospho-Asp-tRNA(Asn) or phospho-Glu-tRNA(Gln). This Aromatoleum aromaticum (strain DSM 19018 / LMG 30748 / EbN1) (Azoarcus sp. (strain EbN1)) protein is Aspartyl/glutamyl-tRNA(Asn/Gln) amidotransferase subunit B.